The chain runs to 183 residues: MKKKTTLSEEDQALFRQLMAGTRKIKQDTIVHRPQRKKISEVPVKRLIQEQADASHYFSDEFQPLLNTEGPVKYVRPDVSHFEAKKLRRGDYSPELFLDLHGLTQLQAKQELGALIAACRREHVFCACVMHGHGKHILKQQTPLWLAQHPHVMAFHQAPKEYGGDAALLVLIEVEEWLPPELP.

A Smr domain is found at 98-173 (LDLHGLTQLQ…GDAALLVLIE (76 aa)).

This sequence belongs to the SmrB family. In terms of assembly, associates with collided ribosomes, but not with correctly translating polysomes.

Its function is as follows. Acts as a ribosome collision sensor. Detects stalled/collided disomes (pairs of ribosomes where the leading ribosome is stalled and a second ribosome has collided with it) and endonucleolytically cleaves mRNA at the 5' boundary of the stalled ribosome. Stalled/collided disomes form a new interface (primarily via the 30S subunits) that binds SmrB. Cleaved mRNA becomes available for tmRNA ligation, leading to ribosomal subunit dissociation and rescue of stalled ribosomes. This is Ribosome rescue factor SmrB from Shigella boydii serotype 18 (strain CDC 3083-94 / BS512).